Consider the following 194-residue polypeptide: Small COPII coat GTPase SAR1B (194 aa).

Positions 2–4 (FLV) match the STAR; SAR1-N-terminal activation recruitment. Required for the activation and subsequent recruitment to ER membrane motif. The interval 10-14 (MFLWL) is mediates recruitment to ER membranes. GDP is bound by residues Asn-30, Ala-31, Gly-32, Lys-33, Thr-34, and Thr-35. Residue Asn-30 participates in GTP binding. Gly-32, Lys-33, Thr-34, and Thr-35 together coordinate GTP. Asp-70 is a binding site for Mg(2+). Positions 131, 133, and 172 each coordinate GDP. GTP contacts are provided by Lys-131, Asp-133, and Ile-172.

Belongs to the small GTPase superfamily. SAR1 family. In terms of assembly, homodimer; upon association with membrane. Part of the coat protein complex II/COPII, composed of SEC23/24 and SEC13/31 heterodimers, that it helps recruit and assemble on endoplasmic reticulum (ER) membranes at ER exit sites.

Its subcellular location is the endoplasmic reticulum membrane. The protein localises to the golgi apparatus. The protein resides in the golgi stack membrane. It localises to the cytoplasm. It is found in the cytosol. It carries out the reaction GTP + H2O = GDP + phosphate + H(+). Its activity is regulated as follows. Small GTPases activation is mediated by guanine exchange factors (GEF), while inactivation through hydrolysis of the bound GTP is stimulated by GTPase activating proteins (GAP). Functionally, small GTPase that cycles between an active GTP-bound and an inactive GDP-bound state and mainly functions in vesicle-mediated endoplasmic reticulum (ER) to Golgi transport. The active GTP-bound form inserts into the endoplasmic reticulum membrane where it recruits the remainder of the coat protein complex II/COPII. The coat protein complex II assembling and polymerizing on endoplasmic reticulum membrane is responsible for both the sorting of cargos and the deformation and budding of membranes into vesicles destined to the Golgi. In Dictyostelium discoideum (Social amoeba), this protein is Small COPII coat GTPase SAR1B (sarB).